The chain runs to 475 residues: uncharacterized protein (475 aa).

The chain crosses the membrane as a helical span at residues 19–39 (IKVGVFFVAILLILTGILLTI). Disordered stretches follow at residues 55–79 (GEYH…NATS) and 330–350 (SSPF…PHKG). Residues 60 to 79 (LNTSPNENSTALQPDENATS) show a composition bias toward polar residues. Residues 336–348 (NRRHPVTGRIRPH) are compositionally biased toward basic residues. H348 provides a ligand contact to Zn(2+).

It in the central section; belongs to the OapA family. This sequence in the C-terminal section; belongs to the peptidase M23B family. The cofactor is Zn(2+).

The protein localises to the cell membrane. This is an uncharacterized protein from Haemophilus influenzae (strain ATCC 51907 / DSM 11121 / KW20 / Rd).